Reading from the N-terminus, the 69-residue chain is Cell division protein CrgA (69 aa).

The next 2 membrane-spanning stretches (helical) occupy residues 14–34 (VWFPTIMFGLMGTGAVWMVLF) and 45–65 (AVGTWNILIAFGIIMAGFAMM).

The protein belongs to the CrgA family.

Its subcellular location is the cell membrane. Involved in cell division. In Tropheryma whipplei (strain TW08/27) (Whipple's bacillus), this protein is Cell division protein CrgA.